The sequence spans 448 residues: UDP-glucose 6-dehydrogenase (448 aa).

Residues 2–19, Val11, Asp30, Lys35, Thr121, and Glu152 contribute to the NAD(+) site; that span reads NITF…GIIM. Residues 148–152, Lys204, Asn208, 249–253, and Gly257 contribute to the substrate site; these read EFLRE and FLNAG. Cys260 (nucleophile) is an active-site residue. Residue Lys263 coordinates NAD(+). Lys321 serves as a coordination point for substrate. Arg328 serves as a coordination point for NAD(+).

It belongs to the UDP-glucose/GDP-mannose dehydrogenase family.

The catalysed reaction is UDP-alpha-D-glucose + 2 NAD(+) + H2O = UDP-alpha-D-glucuronate + 2 NADH + 3 H(+). It functions in the pathway nucleotide-sugar biosynthesis; UDP-alpha-D-glucuronate biosynthesis; UDP-alpha-D-glucuronate from UDP-alpha-D-glucose: step 1/1. This is UDP-glucose 6-dehydrogenase (udg) from Rickettsia felis (strain ATCC VR-1525 / URRWXCal2) (Rickettsia azadi).